The following is a 404-amino-acid chain: Propionate kinase PduW (404 aa).

It belongs to the acetokinase family. PduW subfamily.

It localises to the cytoplasm. It carries out the reaction propanoate + ATP = propanoyl phosphate + ADP. The protein operates within polyol metabolism; 1,2-propanediol degradation. Its pathway is organic acid metabolism; propanoate degradation. Its function is as follows. Works with phosphate acetyltransferase (pta) to capture exogenous propionate and regenerate propionyl-CoA during degradation of propionate and 1,2-propanediol (1,2-PD). Ectopic expression partially complements a cobB deletion allowing some growth on propionate. Restores growth to an eutQ deletion on ethanolamine and tetrathionate under anoxic conditions. The polypeptide is Propionate kinase PduW (Salmonella typhimurium (strain LT2 / SGSC1412 / ATCC 700720)).